Reading from the N-terminus, the 312-residue chain is Methionyl-tRNA formyltransferase (312 aa).

A (6S)-5,6,7,8-tetrahydrofolate-binding site is contributed by 109–112 (SLLP).

The protein belongs to the Fmt family.

It carries out the reaction L-methionyl-tRNA(fMet) + (6R)-10-formyltetrahydrofolate = N-formyl-L-methionyl-tRNA(fMet) + (6S)-5,6,7,8-tetrahydrofolate + H(+). Functionally, attaches a formyl group to the free amino group of methionyl-tRNA(fMet). The formyl group appears to play a dual role in the initiator identity of N-formylmethionyl-tRNA by promoting its recognition by IF2 and preventing the misappropriation of this tRNA by the elongation apparatus. This chain is Methionyl-tRNA formyltransferase, found in Listeria monocytogenes serovar 1/2a (strain ATCC BAA-679 / EGD-e).